The sequence spans 792 residues: Phenylalanine--tRNA ligase beta subunit (792 aa).

In terms of domain architecture, tRNA-binding spans 40 to 156; the sequence is FPRTENLIVG…AKLNDIDPLK (117 aa). Residues 404–472 enclose the B5 domain; it reads LKDNLIDFDS…KKINVNNLEL (69 aa). Aspartate 450, aspartate 456, glutamate 459, and glutamate 460 together coordinate Mg(2+).

Belongs to the phenylalanyl-tRNA synthetase beta subunit family. Type 1 subfamily. Tetramer of two alpha and two beta subunits. It depends on Mg(2+) as a cofactor.

It localises to the cytoplasm. The enzyme catalyses tRNA(Phe) + L-phenylalanine + ATP = L-phenylalanyl-tRNA(Phe) + AMP + diphosphate + H(+). This Malacoplasma penetrans (strain HF-2) (Mycoplasma penetrans) protein is Phenylalanine--tRNA ligase beta subunit.